A 371-amino-acid polypeptide reads, in one-letter code: Dual-specificity RNA methyltransferase RlmN (371 aa).

Glu97 functions as the Proton acceptor in the catalytic mechanism. The Radical SAM core domain maps to 103–341; sequence DGDRATLCVS…VTVRTTRGDD (239 aa). Cys110 and Cys346 form a disulfide bridge. Positions 117, 121, and 124 each coordinate [4Fe-4S] cluster. S-adenosyl-L-methionine contacts are provided by residues 171 to 172, Ser203, 225 to 227, and Asn303; these read GE and SLH. The active-site S-methylcysteine intermediate is Cys346.

The protein belongs to the radical SAM superfamily. RlmN family. The cofactor is [4Fe-4S] cluster.

It is found in the cytoplasm. It carries out the reaction adenosine(2503) in 23S rRNA + 2 reduced [2Fe-2S]-[ferredoxin] + 2 S-adenosyl-L-methionine = 2-methyladenosine(2503) in 23S rRNA + 5'-deoxyadenosine + L-methionine + 2 oxidized [2Fe-2S]-[ferredoxin] + S-adenosyl-L-homocysteine. The enzyme catalyses adenosine(37) in tRNA + 2 reduced [2Fe-2S]-[ferredoxin] + 2 S-adenosyl-L-methionine = 2-methyladenosine(37) in tRNA + 5'-deoxyadenosine + L-methionine + 2 oxidized [2Fe-2S]-[ferredoxin] + S-adenosyl-L-homocysteine. Specifically methylates position 2 of adenine 2503 in 23S rRNA and position 2 of adenine 37 in tRNAs. m2A2503 modification seems to play a crucial role in the proofreading step occurring at the peptidyl transferase center and thus would serve to optimize ribosomal fidelity. The sequence is that of Dual-specificity RNA methyltransferase RlmN from Marinomonas sp. (strain MWYL1).